Reading from the N-terminus, the 372-residue chain is ATP-sensitive inward rectifier potassium channel 1 (372 aa).

Residues 1-58 (MFKHLRRWFVTHIFGRSRQRARLVSKDGRCNIEFGNVDAQSRFIFFVDIWTTVLDLKW) lie on the Cytoplasmic side of the membrane. Ser25 bears the Phosphoserine; by SGK1 mark. A helical transmembrane segment spans residues 59 to 83 (RYKMTVFITAFLGSWFLFGLLWYVV). Topologically, residues 84–108 (AYVHKDLPEFYPPDNRTPCVENING) are extracellular. Asn98 carries N-linked (GlcNAc...) asparagine glycosylation. The helical; Pore-forming intramembrane region spans 109 to 120 (MTSAFLFSLETQ). Positions 121–127 (VTIGYGF) form an intramembrane region, pore-forming. The Selectivity filter motif lies at 122 to 127 (TIGYGF). Residues 128-136 (RFVTEQCAT) are Extracellular-facing. The chain crosses the membrane as a helical span at residues 137 to 158 (AIFLLIFQSILGVIINSFMCGA). The Cytoplasmic portion of the chain corresponds to 159–372 (ILAKISRPKK…EVDETDDTQM (214 aa)). Positions 161-188 (AKISRPKKRAKTITFSKNAVISKRGGKL) are polyphosphoinositide (PIP2)-binding. Residue 204 to 211 (GSHIYGKL) participates in ATP binding.

It belongs to the inward rectifier-type potassium channel (TC 1.A.2.1) family. KCNJ1 subfamily. Interacts with SGK1 and SLC9A3R2/NHERF2. Post-translationally, phosphorylation at Ser-25 by SGK1 is necessary for its expression at the cell membrane.

Its subcellular location is the cell membrane. The catalysed reaction is K(+)(in) = K(+)(out). Its activity is regulated as follows. Inhibited by WNK3. Activated by phosphatidylinositol 4,5 biphosphate (PtdIns(4,5)P2). Its function is as follows. Inward rectifier potassium channels are characterized by a greater tendency to allow potassium to flow into the cell rather than out of it. Their voltage dependence is regulated by the concentration of extracellular potassium; as external potassium is raised, the voltage range of the channel opening shifts to more positive voltages. The inward rectification is mainly due to the blockage of outward current by internal magnesium. This channel is activated by internal ATP and can be blocked by external barium. In the kidney, probably plays a major role in potassium homeostasis. The polypeptide is ATP-sensitive inward rectifier potassium channel 1 (Kcnj1) (Mus musculus (Mouse)).